The chain runs to 86 residues: Class II hydrophobin 2 (86 aa).

The signal sequence occupies residues 1–15; sequence MQFFAVALFATSALA. Disulfide bonds link C18/C67, C28/C58, C29/C41, and C68/C79.

It belongs to the cerato-ulmin hydrophobin family. Homodimer. Homodimers further self-assemble to form highly ordered films at water-air interfaces through intermolecular interactions.

The protein resides in the secreted. It is found in the spore wall. It localises to the cell wall. Aerial growth, conidiation, and dispersal of filamentous fungi in the environment rely upon a capability of their secreting small amphipathic proteins called hydrophobins (HPBs) with low sequence identity. Class I can self-assemble into an outermost layer of rodlet bundles on aerial cell surfaces, conferring cellular hydrophobicity that supports fungal growth, development and dispersal; whereas Class II form highly ordered films at water-air interfaces through intermolecular interactions but contribute nothing to the rodlet structure. Hbf2 is a class II hydrophobin that is involved in sporuration. This is Class II hydrophobin 2 from Hypocrea jecorina (Trichoderma reesei).